The sequence spans 330 residues: D-lactate dehydrogenase (330 aa).

Residues 156-157 (RI), Asp-176, 206-207 (VP), 233-235 (AAR), and Asp-259 contribute to the NAD(+) site. Residue Arg-235 is part of the active site. Glu-264 is a catalytic residue. The active-site Proton donor is the His-296.

This sequence belongs to the D-isomer specific 2-hydroxyacid dehydrogenase family.

It carries out the reaction (R)-lactate + NAD(+) = pyruvate + NADH + H(+). The sequence is that of D-lactate dehydrogenase (ldhD) from Staphylococcus aureus (strain MSSA476).